The following is a 616-amino-acid chain: Probable Xaa-Pro aminopeptidase P (616 aa).

4 residues coordinate Mn(2+): Asp-413, Asp-424, Glu-522, and Glu-536.

The protein belongs to the peptidase M24B family. It depends on Mn(2+) as a cofactor.

The enzyme catalyses Release of any N-terminal amino acid, including proline, that is linked to proline, even from a dipeptide or tripeptide.. Functionally, catalyzes the removal of a penultimate prolyl residue from the N-termini of peptides. The polypeptide is Probable Xaa-Pro aminopeptidase P (AMPP) (Paracoccidioides lutzii (strain ATCC MYA-826 / Pb01) (Paracoccidioides brasiliensis)).